The chain runs to 160 residues: uncharacterized protein (160 aa).

This is an uncharacterized protein from Escherichia coli (strain K12).